We begin with the raw amino-acid sequence, 948 residues long: Protocadherin alpha-2 (948 aa).

Residues 1–22 (MASSIRRGLGAWTRLLSLLLLA) form the signal peptide. At 23 to 697 (AWEVGSGQLR…GSEATLVDVN (675 aa)) the chain is on the extracellular side. 6 consecutive Cadherin domains span residues 30-133 (QLRY…PPVF), 157-242 (ASDA…EPTF), 243-350 (AQSV…TPEV), 351-455 (SITS…APAF), 456-565 (AQPE…APAL), and 588-678 (GHVV…APKA). N-linked (GlcNAc...) asparagine glycans are attached at residues N257, N265, N362, and N548. The helical transmembrane segment at 698 to 718 (VYLIIAICAVSSLLVLTVLLY) threads the bilayer. Topologically, residues 719 to 948 (TALRCSVPAT…GNSTTDNSDQ (230 aa)) are cytoplasmic. Residues 734 to 737 (PGKP) form a PXXP 1 repeat. The 5 X 4 AA repeats of P-X-X-P stretch occupies residues 734–892 (PGKPTLVCSS…PDKFIIPGSP (159 aa)). 3 disordered regions span residues 755–801 (RQRV…RQPN), 829–854 (GPGGPDQQWPTVSSATPEPEAGEVSP), and 868–948 (KYGP…NSDQ). Over residues 783–795 (AEEKQLSESEYVG) the composition is skewed to basic and acidic residues. PXXP repeat units lie at residues 797-800 (PRQP), 830-833 (PGGP), 871-874 (PGNP), and 889-892 (PGSP). Basic and acidic residues predominate over residues 907–921 (DKSDFITFGKKEETK).

The protein resides in the cell membrane. Functionally, potential calcium-dependent cell-adhesion protein. May be involved in the establishment and maintenance of specific neuronal connections in the brain. The chain is Protocadherin alpha-2 (PCDHA2) from Pan troglodytes (Chimpanzee).